A 2138-amino-acid chain; its full sequence is DNA polymerase epsilon catalytic subunit B (2138 aa).

A Nuclear localization signal 1 motif is present at residues 1224–1231 (EKRKWKMT). 4 residues coordinate Zn(2+): Cys-2015, Cys-2018, Cys-2040, and Cys-2045. A CysA-type zinc finger spans residues 2015–2045 (CSNCGAYRDLDFCRDSALLTEKEWSCADPQC). The [4Fe-4S] cluster site is built by Cys-2076, Cys-2079, Cys-2091, and Cys-2093. Residues 2076 to 2093 (CNRCNQVKAAHLTEQCEC) carry the CysB motif motif. Positions 2107–2114 (HKRIEIFL) match the Nuclear localization signal 2 motif.

This sequence belongs to the DNA polymerase type-B family. In terms of assembly, heterotetramer. It depends on [4Fe-4S] cluster as a cofactor. In terms of tissue distribution, mostly expressed at low levels in inflorescence (floral meristem and flowers until anthesis), and, to a lower extent, in seeds.

The protein localises to the nucleus. The enzyme catalyses DNA(n) + a 2'-deoxyribonucleoside 5'-triphosphate = DNA(n+1) + diphosphate. Its function is as follows. DNA polymerase II, which participates in chromosomal DNA replication. Involved in the determination of cell fate during plant embryogenesis. Contributes to the flowering time repression. The polypeptide is DNA polymerase epsilon catalytic subunit B (POL2B) (Arabidopsis thaliana (Mouse-ear cress)).